Reading from the N-terminus, the 256-residue chain is Transcription factor bHLH131 (256 aa).

Positions 91 to 140 (VAAKKHSDAERRRRLRINSQFATLRTILPNLVKQDKASVLGETVRYFNEL) constitute a bHLH domain.

Homodimer.

Its subcellular location is the nucleus. The polypeptide is Transcription factor bHLH131 (BHLH131) (Arabidopsis thaliana (Mouse-ear cress)).